Reading from the N-terminus, the 437-residue chain is ATP-dependent RNA helicase RhlB (437 aa).

Positions 9–37 (QKFADLGLQPQVTEGLEKKGFEYCTPIQA) match the Q motif motif. The region spanning 40–219 (LPVLLTGQDI…FEHMHNPEHV (180 aa)) is the Helicase ATP-binding domain. Residue 53–60 (AQTGTGKT) coordinates ATP. Residues 165-168 (DEAD) carry the DEAD box motif. Positions 245-390 (ALLQTLIEEE…VSEYDASALI (146 aa)) constitute a Helicase C-terminal domain. Positions 397–437 (IRMRAPRVQQRRTNTGGTRSGNRKPQGRRPRQPRQSAPKQS) are disordered. A compositionally biased stretch (basic residues) spans 417–428 (GNRKPQGRRPRQ).

It belongs to the DEAD box helicase family. RhlB subfamily. As to quaternary structure, component of the RNA degradosome, which is a multiprotein complex involved in RNA processing and mRNA degradation.

It is found in the cytoplasm. It carries out the reaction ATP + H2O = ADP + phosphate + H(+). DEAD-box RNA helicase involved in RNA degradation. Has RNA-dependent ATPase activity and unwinds double-stranded RNA. This chain is ATP-dependent RNA helicase RhlB, found in Vibrio parahaemolyticus serotype O3:K6 (strain RIMD 2210633).